We begin with the raw amino-acid sequence, 528 residues long: Cytochrome P450 monooxygenase lenC (528 aa).

The chain crosses the membrane as a helical span at residues 5–27 (FVLPHPASMGASCILGLLLLTIL). Cysteine 469 is a heme binding site.

This sequence belongs to the cytochrome P450 family. It depends on heme as a cofactor.

It localises to the membrane. The protein operates within alkaloid biosynthesis. Its function is as follows. Nonribosomal peptide synthetase; part of the gene cluster that mediates the biosynthesis of the ergot alkaloids lentopeptins A and B. Within the pathway, lenC catalyzes the post-NRPS oxidative modification steps using as substrate the N-acyldiketopiperazine intermediate produced by the NRPS lenA. Lentopeptin A forms via a stereospecific hydroxylation, followed by a spontaneous bicyclic lactam core formation, while lentopeptin B is produced through an initial dehydrogenation, followed by a bicyclic lactam core formation and stereospecific hydration. The phenylalanine ammonia-lyase lenB provides the cinnamic acid starter unit to the NRPS lenA for the synthesis of the N-acyldiketopiperazine intermediate which in turn is converted into lentopeptins A and B by lenC. This chain is Cytochrome P450 monooxygenase lenC, found in Aspergillus lentulus.